Consider the following 125-residue polypeptide: Large ribosomal subunit protein uL18 (125 aa).

Glycine 2 carries the N-acetylglycine modification. 2 positions are modified to N6-acetyllysine: lysine 5 and lysine 48.

Belongs to the universal ribosomal protein uL18 family. Component of the large ribosomal subunit (LSU). Part of the 5S RNP complex, which is a LSU subcomplex composed of the 5S RNA, RPL5 and RPL11. Component of a hexameric 5S RNP precursor complex, composed of 5S RNA, RRS1, RPF2/BXDC1, RPL5, RPL11 and HEATR3; this complex acts as a precursor for ribosome assembly. Interacts with NVL in an ATP-dependent manner. Interacts with RRP1B. Interacts with IPO5, IPO7 and KPNB1; these interactions may be involved in RPL5 nuclear import for the assembly of ribosomal subunits. Interacts with RRP1B.

Its subcellular location is the cytoplasm. It is found in the nucleus. The protein resides in the nucleolus. Its function is as follows. Component of the ribosome, a large ribonucleoprotein complex responsible for the synthesis of proteins in the cell. The small ribosomal subunit (SSU) binds messenger RNAs (mRNAs) and translates the encoded message by selecting cognate aminoacyl-transfer RNA (tRNA) molecules. The large subunit (LSU) contains the ribosomal catalytic site termed the peptidyl transferase center (PTC), which catalyzes the formation of peptide bonds, thereby polymerizing the amino acids delivered by tRNAs into a polypeptide chain. The nascent polypeptides leave the ribosome through a tunnel in the LSU and interact with protein factors that function in enzymatic processing, targeting, and the membrane insertion of nascent chains at the exit of the ribosomal tunnel. As part of the 5S RNP/5S ribonucleoprotein particle it is an essential component of the LSU, required for its formation and the maturation of rRNAs. It also couples ribosome biogenesis to p53/TP53 activation. As part of the 5S RNP it accumulates in the nucleoplasm and inhibits MDM2, when ribosome biogenesis is perturbed, mediating the stabilization and the activation of TP53. This chain is Large ribosomal subunit protein uL18 (RPL5), found in Sus scrofa (Pig).